We begin with the raw amino-acid sequence, 393 residues long: Digeranylgeranylglycerophospholipid reductase (393 aa).

FAD-binding residues include alanine 13, aspartate 32, cysteine 43, alanine 44, glycine 46, arginine 95, valine 119, aspartate 274, and glycine 286. Arginine 327 and glycine 363 together coordinate a 2,3-bis-O-(geranylgeranyl)-sn-glycerol 1-phospholipid.

It belongs to the geranylgeranyl reductase family. DGGGPL reductase subfamily. FAD serves as cofactor.

It carries out the reaction a 2,3-bis-O-phytanyl-sn-glycerol 1-phospholipid + 8 A = a 2,3-bis-O-(geranylgeranyl)-sn-glycerol 1-phospholipid + 8 AH2. The catalysed reaction is 2,3-bis-O-(phytanyl)-sn-glycerol 1-phosphate + 8 A = 2,3-bis-O-(geranylgeranyl)-sn-glycerol 1-phosphate + 8 AH2. It catalyses the reaction CDP-2,3-bis-O-(geranylgeranyl)-sn-glycerol + 8 AH2 = CDP-2,3-bis-O-(phytanyl)-sn-glycerol + 8 A. The enzyme catalyses archaetidylserine + 8 AH2 = 2,3-bis-O-phytanyl-sn-glycero-3-phospho-L-serine + 8 A. The protein operates within membrane lipid metabolism; glycerophospholipid metabolism. Functionally, is involved in the reduction of 2,3-digeranylgeranylglycerophospholipids (unsaturated archaeols) into 2,3-diphytanylglycerophospholipids (saturated archaeols) in the biosynthesis of archaeal membrane lipids. Catalyzes the formation of archaetidic acid (2,3-di-O-phytanyl-sn-glyceryl phosphate) from 2,3-di-O-geranylgeranylglyceryl phosphate (DGGGP) via the hydrogenation of each double bond of the isoprenoid chains. Is also probably able to reduce double bonds of geranyl groups in CDP-2,3-bis-O-(geranylgeranyl)-sn-glycerol and archaetidylserine, thus acting at various stages in the biosynthesis of archaeal membrane lipids. The sequence is that of Digeranylgeranylglycerophospholipid reductase from Pyrococcus horikoshii (strain ATCC 700860 / DSM 12428 / JCM 9974 / NBRC 100139 / OT-3).